The chain runs to 241 residues: Phycocyanobilin:ferredoxin oxidoreductase (241 aa).

This sequence belongs to the HY2 family.

It catalyses the reaction (2R,3Z)-phycocyanobilin + 4 oxidized [2Fe-2S]-[ferredoxin] = biliverdin IXalpha + 4 reduced [2Fe-2S]-[ferredoxin] + 4 H(+). Functionally, catalyzes the four-electron reduction of biliverdin IX-alpha (2-electron reduction at both the A and D rings); the reaction proceeds via an isolatable 2-electron intermediate, 181,182-dihydrobiliverdin. This Prochlorococcus marinus (strain MIT 9301) protein is Phycocyanobilin:ferredoxin oxidoreductase.